The chain runs to 499 residues: Dual specificity protein kinase CLK2 (499 aa).

Residues 1 to 67 (MPHPRRYHSS…SYDDRSSDRR (67 aa)) are disordered. The segment covering 8–21 (HSSERGSRGSYREH) has biased composition (basic and acidic residues). The segment covering 22 to 33 (YRSRKHKRRRSR) has biased composition (basic residues). At S34 the chain carries Phosphoserine; by PKB/AKT1. Residues 47-67 (REDSYHVRSRSSYDDRSSDRR) are compositionally biased toward basic and acidic residues. S98 carries the post-translational modification Phosphoserine. Residue Y99 is modified to Phosphotyrosine; by autocatalysis. The interval 101–143 (YQRENSSYRSQRSSRRKHRRRRRRSRTFSRSSSQHSSRRAKSV) is disordered. Basic residues predominate over residues 112 to 127 (RSSRRKHRRRRRRSRT). T127 carries the post-translational modification Phosphothreonine; by PKB/AKT1. The residue at position 142 (S142) is a Phosphoserine; by autocatalysis. Y153 is subject to Phosphotyrosine. One can recognise a Protein kinase domain in the interval 163-479 (YEIVSTLGEG…LGEALQHPFF (317 aa)). Residues 169–177 (LGEGTFGRV) and K193 contribute to the ATP site. D290 serves as the catalytic Proton acceptor. Phosphothreonine; by PKB/AKT2 is present on T344.

This sequence belongs to the protein kinase superfamily. CMGC Ser/Thr protein kinase family. Lammer subfamily. Interacts with RBMX. Interacts with AKT1 and UBL5. Post-translationally, autophosphorylates on all three types of residues. Phosphorylation on Ser-34 and Thr-127 by AKT1 is induced by ionizing radiation or insulin. Phosphorylation plays a critical role in cell proliferation following low dose radiation and prevents cell death following high dose radiation. Phosphorylation at Thr-344 by PKB/AKT2 induces its kinase activity which is required for its stability. The phosphorylation status at Ser-142 influences its subnuclear localization; inhibition of phosphorylation at Ser-142 results in accumulation in the nuclear speckle. As to expression, endothelial cells. Expressed in androgen-dependent prostate cancer cells.

The protein resides in the nucleus. Its subcellular location is the nucleus speckle. The enzyme catalyses L-seryl-[protein] + ATP = O-phospho-L-seryl-[protein] + ADP + H(+). It catalyses the reaction L-threonyl-[protein] + ATP = O-phospho-L-threonyl-[protein] + ADP + H(+). The catalysed reaction is L-tyrosyl-[protein] + ATP = O-phospho-L-tyrosyl-[protein] + ADP + H(+). 5,6-dichloro-1-b-D-ribofuranosylbenzimidazole (DRB) inhibits autophosphorylation. TG003 inhibits its kinase activity and affects the regulation of alternative splicing mediated by phosphorylation of SR proteins. Its function is as follows. Dual specificity kinase acting on both serine/threonine and tyrosine-containing substrates. Phosphorylates serine- and arginine-rich (SR) proteins of the spliceosomal complex. May be a constituent of a network of regulatory mechanisms that enable SR proteins to control RNA splicing and can cause redistribution of SR proteins from speckles to a diffuse nucleoplasmic distribution. Acts as a suppressor of hepatic gluconeogenesis and glucose output by repressing PPARGC1A transcriptional activity on gluconeogenic genes via its phosphorylation. Phosphorylates PPP2R5B thereby stimulating the assembly of PP2A phosphatase with the PPP2R5B-AKT1 complex leading to dephosphorylation of AKT1. Phosphorylates: PTPN1, SRSF1 and SRSF3. Regulates the alternative splicing of tissue factor (F3) pre-mRNA in endothelial cells. Phosphorylates PAGE4 at several serine and threonine residues and this phosphorylation attenuates the ability of PAGE4 to potentiate the transcriptional activator activity of JUN. This is Dual specificity protein kinase CLK2 (CLK2) from Homo sapiens (Human).